We begin with the raw amino-acid sequence, 103 residues long: Cell division suppressor protein YneA (103 aa).

Residues 36-87 form the LysM domain; the sequence is VKIEVQSGDTLWGLADQVNDSKSIDKNAFIDWVTQHNDLASTEIQPGDILVI.

This sequence belongs to the YneA family.

The protein resides in the cytoplasm. Inhibits cell division during the SOS response. Affects a later stage of the cell division protein assembly, after the assembly of the Z ring, by probably suppressing recruitment of FtsL and/or DivIC to the division machinery. The protein is Cell division suppressor protein YneA of Bacillus pumilus (strain SAFR-032).